Here is a 129-residue protein sequence, read N- to C-terminus: Omega-scoloptoxin(05)-Ssm1a (129 aa).

Positions 1-24 are cleaved as a signal peptide; that stretch reads MPSLCIIALFGTLTFYTLIPSIHT. Positions 25–46 are excised as a propeptide; sequence LKCVRCDGPMSNYDCKTTYPAA.

Belongs to the scoloptoxin-05 family. Contains 3 disulfide bonds. In terms of tissue distribution, expressed by the venom gland.

The protein localises to the secreted. Functionally, toxin that increase voltage-gated calcium channel (Cav) currents in DRG neurons by 70% and 120%, when 1 uM and 10 uM are tested, respectively. This is Omega-scoloptoxin(05)-Ssm1a from Scolopendra mutilans (Chinese red-headed centipede).